We begin with the raw amino-acid sequence, 132 residues long: Acyl-CoA thioester hydrolase YciA (132 aa).

A HotDog ACOT-type domain is found at 8–123 (PQGDLVLRTL…LFKYVAVDPE (116 aa)).

This sequence belongs to the acyl coenzyme A hydrolase family.

Its function is as follows. Catalyzes the hydrolysis of the thioester bond in palmitoyl-CoA and malonyl-CoA. The protein is Acyl-CoA thioester hydrolase YciA (yciA) of Escherichia coli O6:H1 (strain CFT073 / ATCC 700928 / UPEC).